Reading from the N-terminus, the 651-residue chain is J domain-containing protein required for chloroplast accumulation response 1 (651 aa).

The segment covering 1 to 17 (MQTLPSSETVLLGSNSA) has biased composition (polar residues). Disordered regions lie at residues 1–56 (MQTL…TRHS), 114–138 (GSRI…QFSL), 156–176 (LNKN…SKAD), 250–291 (KLGK…TDLK), and 308–526 (KPLD…IDEP). Ser56 carries the phosphoserine modification. Residues 126-137 (SSSGTSSPSQFS) are compositionally biased toward low complexity. Composition is skewed to basic and acidic residues over residues 250-259 (KLGKNEEGDG), 281-291 (TKEEKTETDLK), 337-357 (IFHE…EVRK), 405-416 (VGKDGVKGKVSD), 441-456 (RAKE…DGSN), and 488-497 (QKKDSDRESM). The stretch at 532–562 (DVEDITQDENKMEEANKDAEEIKNIDAKIRK) forms a coiled coil. Positions 586–651 (SGWKPVPLMD…WDHFNTLGPV (66 aa)) constitute a J domain.

Expressed in leaves and stems, but not in roots.

The protein resides in the cytoplasm. In terms of biological role, required for chloroplast photorelocation movement; chloroplast accumulation upon low blue light and for chloroplast movement to the bottom of cells in darkness, by modulating chloroplast actin (Cp-actin) filaments distribution, appearance and disappearance. May mediate a slight resistance to aluminum in root hair cells. The polypeptide is J domain-containing protein required for chloroplast accumulation response 1 (JAC1) (Arabidopsis thaliana (Mouse-ear cress)).